Here is a 222-residue protein sequence, read N- to C-terminus: uncharacterized protein (222 aa).

This is an uncharacterized protein from Acanthamoeba polyphaga mimivirus (APMV).